Consider the following 86-residue polypeptide: Small ribosomal subunit protein bS20 (86 aa).

Residues 1-27 (MANSKSAKKRAIQAEKRRQHNASRRSM) are compositionally biased toward basic residues. The interval 1–28 (MANSKSAKKRAIQAEKRRQHNASRRSMM) is disordered.

This sequence belongs to the bacterial ribosomal protein bS20 family.

In terms of biological role, binds directly to 16S ribosomal RNA. The protein is Small ribosomal subunit protein bS20 of Vibrio parahaemolyticus serotype O3:K6 (strain RIMD 2210633).